Here is a 310-residue protein sequence, read N- to C-terminus: ADP-L-glycero-D-manno-heptose-6-epimerase (310 aa).

NADP(+)-binding positions include 10-11, 31-32, Lys-38, Lys-53, 75-79, and Asn-92; these read FI, DN, and EGACS. Residue Tyr-140 is the Proton acceptor of the active site. An NADP(+)-binding site is contributed by Lys-144. Asn-169 is a binding site for substrate. NADP(+) contacts are provided by Val-170 and Lys-178. The active-site Proton acceptor is the Lys-178. Residues Ser-180, His-187, 201–204, and Arg-209 each bind substrate; that span reads FEGS. An N6-acetyllysine modification is found at Lys-267. Residue Tyr-272 participates in substrate binding.

This sequence belongs to the NAD(P)-dependent epimerase/dehydratase family. HldD subfamily. As to quaternary structure, homopentamer. It depends on NADP(+) as a cofactor.

The catalysed reaction is ADP-D-glycero-beta-D-manno-heptose = ADP-L-glycero-beta-D-manno-heptose. It participates in nucleotide-sugar biosynthesis; ADP-L-glycero-beta-D-manno-heptose biosynthesis; ADP-L-glycero-beta-D-manno-heptose from D-glycero-beta-D-manno-heptose 7-phosphate: step 4/4. Its function is as follows. Catalyzes the interconversion between ADP-D-glycero-beta-D-manno-heptose and ADP-L-glycero-beta-D-manno-heptose via an epimerization at carbon 6 of the heptose. This chain is ADP-L-glycero-D-manno-heptose-6-epimerase, found in Escherichia coli (strain ATCC 8739 / DSM 1576 / NBRC 3972 / NCIMB 8545 / WDCM 00012 / Crooks).